The following is a 361-amino-acid chain: Palmitoyltransferase ZDHHC2 (361 aa).

Residues 1–15 (MAPSGSRSFDCWRVL) are Cytoplasmic-facing. Residues 16–36 (YWIPVLFISLIVAWSYYAYVV) form a helical membrane-spanning segment. At 37 to 50 (QLCIETIENMGEKT) the chain is on the lumenal side. The helical transmembrane segment at 51 to 71 (VYLLIYHLLFLMFVWSYWQTI) threads the bilayer. The Cytoplasmic segment spans residues 72–167 (YSKPMNPLKE…NNCVGFANYK (96 aa)). Residues 124–174 (RYCDRCLLLKPDRCHHCSACDMCILKMDHHCPWVNNCVGFANYKFFMLFLA) form the DHHC domain. The active-site S-palmitoyl cysteine intermediate is C154. A helical transmembrane segment spans residues 168-188 (FFMLFLAYSLLYCLFVTATDM). Residues 189–207 (QYFIQFWTNGLPDTQAKFH) lie on the Lumenal side of the membrane. A helical membrane pass occupies residues 208-228 (IMFLFFAASTFSVSLAFLFAY). Over 229–361 (HCWLVCKNRS…NPALTIEKET (133 aa)) the chain is Cytoplasmic. The mediates localization to plasma membrane and recycling endosomes stretch occupies residues 296-361 (NPDPEQPSIP…NPALTIEKET (66 aa)). Residues 299 to 308 (PEQPSIPPGR) show a composition bias toward pro residues. Residues 299 to 361 (PEQPSIPPGR…NPALTIEKET (63 aa)) form a disordered region. The segment covering 331-340 (SRLLNNGQTD) has biased composition (polar residues). The Non-canonical dileucine endocytic signal signature appears at 333 to 334 (LL). Residues 352–355 (NPAL) carry the NPxY-like endocytic signal motif.

Belongs to the DHHC palmitoyltransferase family. In terms of assembly, monomer. Homodimer. The monomeric form has a higher catalytic activity. In terms of processing, autopalmitoylated.

The protein resides in the endoplasmic reticulum membrane. The protein localises to the golgi apparatus membrane. Its subcellular location is the postsynaptic density. It is found in the postsynaptic recycling endosome membrane. It localises to the cell membrane. The catalysed reaction is L-cysteinyl-[protein] + hexadecanoyl-CoA = S-hexadecanoyl-L-cysteinyl-[protein] + CoA. It carries out the reaction L-cysteinyl-[protein] + tetradecanoyl-CoA = S-tetradecanoyl-L-cysteinyl-[protein] + CoA. The enzyme catalyses L-cysteinyl-[protein] + octadecanoyl-CoA = S-octadecanoyl-L-cysteinyl-[protein] + CoA. In terms of biological role, palmitoyltransferase that catalyzes the addition of palmitate onto various protein substrates and is involved in a variety of cellular processes. Has no stringent fatty acid selectivity and in addition to palmitate can also transfer onto target proteins myristate from tetradecanoyl-CoA and stearate from octadecanoyl-CoA. In Danio rerio (Zebrafish), this protein is Palmitoyltransferase ZDHHC2.